Consider the following 98-residue polypeptide: Co-chaperonin GroES (98 aa).

The protein belongs to the GroES chaperonin family. Heptamer of 7 subunits arranged in a ring. Interacts with the chaperonin GroEL.

The protein localises to the cytoplasm. Functionally, together with the chaperonin GroEL, plays an essential role in assisting protein folding. The GroEL-GroES system forms a nano-cage that allows encapsulation of the non-native substrate proteins and provides a physical environment optimized to promote and accelerate protein folding. GroES binds to the apical surface of the GroEL ring, thereby capping the opening of the GroEL channel. The polypeptide is Co-chaperonin GroES (Corynebacterium diphtheriae (strain ATCC 700971 / NCTC 13129 / Biotype gravis)).